Reading from the N-terminus, the 343-residue chain is UDP-N-acetylglucosamine--N-acetylmuramyl-(pentapeptide) pyrophosphoryl-undecaprenol N-acetylglucosamine transferase (343 aa).

UDP-N-acetyl-alpha-D-glucosamine-binding positions include 10–12, N113, S174, and Q275; that span reads TGG.

It belongs to the glycosyltransferase 28 family. MurG subfamily.

The protein resides in the cell membrane. The enzyme catalyses di-trans,octa-cis-undecaprenyl diphospho-N-acetyl-alpha-D-muramoyl-L-alanyl-D-glutamyl-meso-2,6-diaminopimeloyl-D-alanyl-D-alanine + UDP-N-acetyl-alpha-D-glucosamine = di-trans,octa-cis-undecaprenyl diphospho-[N-acetyl-alpha-D-glucosaminyl-(1-&gt;4)]-N-acetyl-alpha-D-muramoyl-L-alanyl-D-glutamyl-meso-2,6-diaminopimeloyl-D-alanyl-D-alanine + UDP + H(+). It participates in cell wall biogenesis; peptidoglycan biosynthesis. Functionally, cell wall formation. Catalyzes the transfer of a GlcNAc subunit on undecaprenyl-pyrophosphoryl-MurNAc-pentapeptide (lipid intermediate I) to form undecaprenyl-pyrophosphoryl-MurNAc-(pentapeptide)GlcNAc (lipid intermediate II). In Wolbachia sp. subsp. Brugia malayi (strain TRS), this protein is UDP-N-acetylglucosamine--N-acetylmuramyl-(pentapeptide) pyrophosphoryl-undecaprenol N-acetylglucosamine transferase.